The chain runs to 122 residues: Urease subunit beta (122 aa).

A disordered region spans residues 92–122 (GLRPEYAGELDGRGHEPTAPNYGEKGQGHFE).

This sequence belongs to the urease beta subunit family. As to quaternary structure, heterotrimer of UreA (gamma), UreB (beta) and UreC (alpha) subunits. Three heterotrimers associate to form the active enzyme.

Its subcellular location is the cytoplasm. It catalyses the reaction urea + 2 H2O + H(+) = hydrogencarbonate + 2 NH4(+). It functions in the pathway nitrogen metabolism; urea degradation; CO(2) and NH(3) from urea (urease route): step 1/1. The polypeptide is Urease subunit beta (Saccharopolyspora erythraea (strain ATCC 11635 / DSM 40517 / JCM 4748 / NBRC 13426 / NCIMB 8594 / NRRL 2338)).